Consider the following 349-residue polypeptide: 5-deoxyribose 1-phosphate isomerase (349 aa).

Substrate contacts are provided by residues Arg49–Ala51, Arg92, and Gln199. Catalysis depends on Asp240, which acts as the Proton donor. Asn250–Lys251 provides a ligand contact to substrate.

The protein belongs to the EIF-2B alpha/beta/delta subunits family. DrdI subfamily.

The enzyme catalyses 5-deoxy-alpha-D-ribose 1-phosphate = 5-deoxy-D-ribulose 1-phosphate. It participates in carbohydrate degradation. Catalyzes the isomerization of 5-deoxy-alpha-D-ribose 1-phosphate to 5-deoxy-D-ribulose 1-phosphate, as part of a 5-deoxyribose salvage pathway that recycles this toxic radical SAM enzyme by-product to mainstream metabolites. The polypeptide is 5-deoxyribose 1-phosphate isomerase (Clostridium botulinum (strain ATCC 19397 / Type A)).